The primary structure comprises 388 residues: Succinate--CoA ligase [ADP-forming] subunit beta (388 aa).

Residues lysine 9–histidine 244 form the ATP-grasp domain. Residues lysine 46, glycine 53–glycine 55, glutamate 99, threonine 102, and glutamate 107 contribute to the ATP site. Mg(2+)-binding residues include asparagine 199 and aspartate 213. Residues asparagine 264 and glycine 321–valine 323 contribute to the substrate site.

It belongs to the succinate/malate CoA ligase beta subunit family. In terms of assembly, heterotetramer of two alpha and two beta subunits. It depends on Mg(2+) as a cofactor.

The catalysed reaction is succinate + ATP + CoA = succinyl-CoA + ADP + phosphate. It catalyses the reaction GTP + succinate + CoA = succinyl-CoA + GDP + phosphate. Its pathway is carbohydrate metabolism; tricarboxylic acid cycle; succinate from succinyl-CoA (ligase route): step 1/1. Functionally, succinyl-CoA synthetase functions in the citric acid cycle (TCA), coupling the hydrolysis of succinyl-CoA to the synthesis of either ATP or GTP and thus represents the only step of substrate-level phosphorylation in the TCA. The beta subunit provides nucleotide specificity of the enzyme and binds the substrate succinate, while the binding sites for coenzyme A and phosphate are found in the alpha subunit. The polypeptide is Succinate--CoA ligase [ADP-forming] subunit beta (Shewanella amazonensis (strain ATCC BAA-1098 / SB2B)).